A 238-amino-acid chain; its full sequence is Serine protease SplA (238 aa).

The N-terminal stretch at 1 to 38 is a signal peptide; it reads MNKNVMVKGLTALTILTILTSLGFAENISNQPHSIAKA. Catalysis depends on charge relay system residues His-77, Asp-116, and Ser-192.

It belongs to the peptidase S1B family.

The protein localises to the secreted. This is Serine protease SplA (splA) from Staphylococcus aureus (strain COL).